The chain runs to 325 residues: Pyruvate dehydrogenase E1 component subunit beta (325 aa).

Glu60 contributes to the thiamine diphosphate binding site.

In terms of assembly, heterodimer of an alpha and a beta chain. Thiamine diphosphate serves as cofactor.

It catalyses the reaction N(6)-[(R)-lipoyl]-L-lysyl-[protein] + pyruvate + H(+) = N(6)-[(R)-S(8)-acetyldihydrolipoyl]-L-lysyl-[protein] + CO2. Its function is as follows. The pyruvate dehydrogenase complex catalyzes the overall conversion of pyruvate to acetyl-CoA and CO(2). It contains multiple copies of three enzymatic components: pyruvate dehydrogenase (E1), dihydrolipoamide acetyltransferase (E2) and lipoamide dehydrogenase (E3). In Staphylococcus aureus (strain Mu50 / ATCC 700699), this protein is Pyruvate dehydrogenase E1 component subunit beta (pdhB).